We begin with the raw amino-acid sequence, 882 residues long: DNA mismatch repair protein MutS (882 aa).

627 to 634 (GPNMAGKS) is an ATP binding site.

It belongs to the DNA mismatch repair MutS family.

Functionally, this protein is involved in the repair of mismatches in DNA. It is possible that it carries out the mismatch recognition step. This protein has a weak ATPase activity. The polypeptide is DNA mismatch repair protein MutS (Anaeromyxobacter dehalogenans (strain 2CP-C)).